Here is a 91-residue protein sequence, read N- to C-terminus: DNA-binding protein HU (91 aa).

The protein belongs to the bacterial histone-like protein family. Homodimer.

Histone-like DNA-binding protein which is capable of wrapping DNA to stabilize it, and thus to prevent its denaturation under extreme environmental conditions. This chain is DNA-binding protein HU (hup), found in Lactococcus lactis subsp. lactis (strain IL1403) (Streptococcus lactis).